The primary structure comprises 279 residues: Prephenate dehydratase (279 aa).

The 177-residue stretch at 2-178 folds into the Prephenate dehydratase domain; that stretch reads KIAYLGPRGS…NSTRFWLLGK (177 aa). Residues 194-270 enclose the ACT domain; the sequence is LALTLPDNLP…LGVKVRLLGN (77 aa).

The enzyme catalyses prephenate + H(+) = 3-phenylpyruvate + CO2 + H2O. It participates in amino-acid biosynthesis; L-phenylalanine biosynthesis; phenylpyruvate from prephenate: step 1/1. This Lactococcus lactis subsp. lactis (strain IL1403) (Streptococcus lactis) protein is Prephenate dehydratase (pheA).